The following is a 219-amino-acid chain: PRELI domain-containing protein 1, mitochondrial (219 aa).

The PRELI/MSF1 domain maps to 36–174 (TEDIVHREVT…ILAKLQGEAP (139 aa)).

As to quaternary structure, forms a complex with TRIAP1 in the mitochondrion intermembrane space. Interacts with OPA1 and AIFM1.

It is found in the mitochondrion. Its subcellular location is the mitochondrion intermembrane space. It catalyses the reaction a 1,2-diacyl-sn-glycero-3-phosphate(in) = a 1,2-diacyl-sn-glycero-3-phosphate(out). Involved in the modulation of the mitochondrial apoptotic pathway by ensuring the accumulation of cardiolipin (CL) in mitochondrial membranes. In vitro, the TRIAP1:PRELID1 complex mediates the transfer of phosphatidic acid (PA) between liposomes and probably functions as a PA transporter across the mitochondrion intermembrane space to provide PA for CL synthesis in the inner membrane. Regulates the mitochondrial apoptotic pathway in primary Th cells. Regulates Th cell differentiation by down-regulating STAT6 thereby reducing IL-4-induced Th2 cell number. May be important for the development of vital and immunocompetent organs. This chain is PRELI domain-containing protein 1, mitochondrial (PRELID1), found in Bos taurus (Bovine).